Consider the following 236-residue polypeptide: Osmoprotectant import permease protein OsmY (236 aa).

The next 6 membrane-spanning stretches (helical) occupy residues 9–29 (VLGF…GIGL), 47–67 (LMLV…SGIL), 95–115 (VLAL…VALF), 126–146 (TYAG…GIGM), 180–200 (PLAF…GIYL), and 207–227 (ILGA…LAWF). The ABC transmembrane type-1 domain occupies 43–224 (GQRHLMLVFT…LFALILDTLL (182 aa)).

Belongs to the binding-protein-dependent transport system permease family. As to quaternary structure, the complex is composed of two ATP-binding proteins (OsmV), two transmembrane proteins (OsmW and OsmY) and a solute-binding protein (OsmX).

It localises to the cell inner membrane. Part of the OsmU ABC transporter complex, which is involved in the uptake of osmoprotectants such as choline-O-sulfate and glycine betaine. Probably responsible for the translocation of the substrate across the membrane. In Salmonella typhimurium (strain LT2 / SGSC1412 / ATCC 700720), this protein is Osmoprotectant import permease protein OsmY (osmY).